The following is a 371-amino-acid chain: tRNA-specific 2-thiouridylase MnmA (371 aa).

ATP contacts are provided by residues 13-20 and methionine 39; that span reads GMSGGVDS. Residues 99 to 101 are interaction with target base in tRNA; that stretch reads NPD. Cysteine 104 (nucleophile) is an active-site residue. Cysteine 104 and cysteine 200 are disulfide-bonded. Glycine 128 contributes to the ATP binding site. An interaction with tRNA region spans residues 150 to 152; that stretch reads KDQ. The active-site Cysteine persulfide intermediate is the cysteine 200. The segment at 308–309 is interaction with tRNA; it reads RY.

This sequence belongs to the MnmA/TRMU family.

Its subcellular location is the cytoplasm. The enzyme catalyses S-sulfanyl-L-cysteinyl-[protein] + uridine(34) in tRNA + AH2 + ATP = 2-thiouridine(34) in tRNA + L-cysteinyl-[protein] + A + AMP + diphosphate + H(+). Its function is as follows. Catalyzes the 2-thiolation of uridine at the wobble position (U34) of tRNA, leading to the formation of s(2)U34. In Bacillus cytotoxicus (strain DSM 22905 / CIP 110041 / 391-98 / NVH 391-98), this protein is tRNA-specific 2-thiouridylase MnmA.